A 218-amino-acid polypeptide reads, in one-letter code: Trimethylamine corrinoid protein 2 (218 aa).

The B12-binding N-terminal domain occupies 1 to 92; the sequence is MAGKEEIIAK…EMEKRKSQTK (92 aa). Residues 94–218 enclose the B12-binding domain; it reads LGTVIIGTIE…AKVKAALKVG (125 aa). His107 contributes to the methylcob(III)alamin binding site.

It belongs to the methylamine corrinoid protein family. Can form a complex with MttB.

The protein operates within one-carbon metabolism; methanogenesis from trimethylamine. Its function is as follows. Acts probably as a methyl group carrier between MttB and either MtbA or MtaA. The sequence is that of Trimethylamine corrinoid protein 2 (mttC2) from Methanosarcina mazei (strain ATCC BAA-159 / DSM 3647 / Goe1 / Go1 / JCM 11833 / OCM 88) (Methanosarcina frisia).